The sequence spans 193 residues: Superoxide dismutase [Fe] (193 aa).

4 residues coordinate Fe cation: His-27, His-75, Asp-159, and His-163.

This sequence belongs to the iron/manganese superoxide dismutase family. In terms of assembly, homodimer. Requires Fe cation as cofactor.

The enzyme catalyses 2 superoxide + 2 H(+) = H2O2 + O2. Destroys superoxide anion radicals which are normally produced within the cells and which are toxic to biological systems. This chain is Superoxide dismutase [Fe] (sodB), found in Bacteroides fragilis (strain YCH46).